The chain runs to 499 residues: Probable cytosol aminopeptidase (499 aa).

Residues K263 and D268 each contribute to the Mn(2+) site. K275 is an active-site residue. Mn(2+) contacts are provided by D286, D345, and E347. Residue R349 is part of the active site.

It belongs to the peptidase M17 family. Mn(2+) serves as cofactor.

It localises to the cytoplasm. It carries out the reaction Release of an N-terminal amino acid, Xaa-|-Yaa-, in which Xaa is preferably Leu, but may be other amino acids including Pro although not Arg or Lys, and Yaa may be Pro. Amino acid amides and methyl esters are also readily hydrolyzed, but rates on arylamides are exceedingly low.. The enzyme catalyses Release of an N-terminal amino acid, preferentially leucine, but not glutamic or aspartic acids.. In terms of biological role, presumably involved in the processing and regular turnover of intracellular proteins. Catalyzes the removal of unsubstituted N-terminal amino acids from various peptides. The protein is Probable cytosol aminopeptidase of Bradyrhizobium sp. (strain BTAi1 / ATCC BAA-1182).